Reading from the N-terminus, the 138-residue chain is Phosphoribosyl-AMP cyclohydrolase (138 aa).

Aspartate 92 serves as a coordination point for Mg(2+). Position 93 (cysteine 93) interacts with Zn(2+). Positions 94 and 96 each coordinate Mg(2+). Zn(2+)-binding residues include cysteine 109 and cysteine 116.

The protein belongs to the PRA-CH family. In terms of assembly, homodimer. Mg(2+) serves as cofactor. Zn(2+) is required as a cofactor.

Its subcellular location is the cytoplasm. It carries out the reaction 1-(5-phospho-beta-D-ribosyl)-5'-AMP + H2O = 1-(5-phospho-beta-D-ribosyl)-5-[(5-phospho-beta-D-ribosylamino)methylideneamino]imidazole-4-carboxamide. It participates in amino-acid biosynthesis; L-histidine biosynthesis; L-histidine from 5-phospho-alpha-D-ribose 1-diphosphate: step 3/9. In terms of biological role, catalyzes the hydrolysis of the adenine ring of phosphoribosyl-AMP. In Clavibacter sepedonicus (Clavibacter michiganensis subsp. sepedonicus), this protein is Phosphoribosyl-AMP cyclohydrolase.